The chain runs to 636 residues: 1-deoxy-D-xylulose-5-phosphate synthase (636 aa).

Residues histidine 74 and 115 to 117 (GHA) contribute to the thiamine diphosphate site. Aspartate 146 lines the Mg(2+) pocket. Residues 147 to 148 (GA), asparagine 175, tyrosine 285, and glutamate 368 each bind thiamine diphosphate. Asparagine 175 serves as a coordination point for Mg(2+).

Belongs to the transketolase family. DXPS subfamily. In terms of assembly, homodimer. The cofactor is Mg(2+). Thiamine diphosphate is required as a cofactor.

It carries out the reaction D-glyceraldehyde 3-phosphate + pyruvate + H(+) = 1-deoxy-D-xylulose 5-phosphate + CO2. It functions in the pathway metabolic intermediate biosynthesis; 1-deoxy-D-xylulose 5-phosphate biosynthesis; 1-deoxy-D-xylulose 5-phosphate from D-glyceraldehyde 3-phosphate and pyruvate: step 1/1. Functionally, catalyzes the acyloin condensation reaction between C atoms 2 and 3 of pyruvate and glyceraldehyde 3-phosphate to yield 1-deoxy-D-xylulose-5-phosphate (DXP). This Anaeromyxobacter dehalogenans (strain 2CP-C) protein is 1-deoxy-D-xylulose-5-phosphate synthase.